Here is a 92-residue protein sequence, read N- to C-terminus: Small ribosomal subunit protein bS18 (92 aa).

It belongs to the bacterial ribosomal protein bS18 family. In terms of assembly, part of the 30S ribosomal subunit. Forms a tight heterodimer with protein bS6.

Its function is as follows. Binds as a heterodimer with protein bS6 to the central domain of the 16S rRNA, where it helps stabilize the platform of the 30S subunit. The polypeptide is Small ribosomal subunit protein bS18 (Pelagibacter ubique (strain HTCC1062)).